The sequence spans 341 residues: MKVKDFDFYLPEELIAQHPIEKRDEARLLVLDKETGEIEHKIFKDILDYLTPNDCLVLNNTRVLPARLIGAKEETGGKMEFLLLKRKEKDVWETLVKPGKRAQIGARFIFGNGELKAEVIGMGEEGSRIVKFYYEGIFEEILDQLGQMPLPPYIKEKLDDKEMYQTVYSKEEGSAAAPTAGLHFTEELLKKIEEKGVKLAFLTLHVGLGTFRPVKVEDIQEHVMHSEYYKMDKKTAEIINDTKENGGRVIAVGTTSCRTLETIGAIEGKVGEQSGWTDIFIYPGYKYKVVDALITNFHLPQSTLLMLVSALAGRDNIMNAYNVAVEKEYRFFSFGDAMFIK.

This sequence belongs to the QueA family. Monomer.

It is found in the cytoplasm. It carries out the reaction 7-aminomethyl-7-carbaguanosine(34) in tRNA + S-adenosyl-L-methionine = epoxyqueuosine(34) in tRNA + adenine + L-methionine + 2 H(+). It participates in tRNA modification; tRNA-queuosine biosynthesis. Its function is as follows. Transfers and isomerizes the ribose moiety from AdoMet to the 7-aminomethyl group of 7-deazaguanine (preQ1-tRNA) to give epoxyqueuosine (oQ-tRNA). The protein is S-adenosylmethionine:tRNA ribosyltransferase-isomerase of Clostridium botulinum (strain ATCC 19397 / Type A).